Here is a 672-residue protein sequence, read N- to C-terminus: Transketolase (672 aa).

H35 provides a ligand contact to substrate. Thiamine diphosphate is bound by residues H75 and 124–126; that span reads GPL. D162 is a binding site for Mg(2+). Residues G163 and N192 each coordinate thiamine diphosphate. Residues N192 and I194 each contribute to the Mg(2+) site. 3 residues coordinate substrate: H266, R361, and S388. H266 lines the thiamine diphosphate pocket. E415 serves as the catalytic Proton donor. Position 441 (F441) interacts with thiamine diphosphate. Residues H465, D473, and R524 each coordinate substrate.

This sequence belongs to the transketolase family. As to quaternary structure, homodimer. It depends on Mg(2+) as a cofactor. Ca(2+) serves as cofactor. Requires Mn(2+) as cofactor. The cofactor is Co(2+). Thiamine diphosphate is required as a cofactor.

It catalyses the reaction D-sedoheptulose 7-phosphate + D-glyceraldehyde 3-phosphate = aldehydo-D-ribose 5-phosphate + D-xylulose 5-phosphate. Its pathway is carbohydrate biosynthesis; Calvin cycle. It participates in carbohydrate degradation; pentose phosphate pathway. Catalyzes the transfer of a two-carbon ketol group from a ketose donor to an aldose acceptor, via a covalent intermediate with the cofactor thiamine pyrophosphate. This is Transketolase (tktA) from Rhodobacter capsulatus (strain ATCC BAA-309 / NBRC 16581 / SB1003).